We begin with the raw amino-acid sequence, 165 residues long: Coatomer subunit zeta (165 aa).

Belongs to the adaptor complexes small subunit family. As to quaternary structure, oligomeric complex that consists of at least the alpha, beta, beta', gamma, delta, epsilon and zeta subunits.

It localises to the cytoplasm. The protein resides in the golgi apparatus membrane. Its subcellular location is the cytoplasmic vesicle. The protein localises to the COPI-coated vesicle membrane. Functionally, the coatomer is a cytosolic protein complex that binds to dilysine motifs and reversibly associates with Golgi non-clathrin-coated vesicles, which further mediate biosynthetic protein transport from the ER, via the Golgi up to the trans Golgi network. Coatomer complex is required for budding from Golgi membranes, and is essential for the retrograde Golgi-to-ER transport of dilysine-tagged proteins. The zeta subunit may be involved in regulating the coat assembly and, hence, the rate of biosynthetic protein transport due to its association-dissociation properties with the coatomer complex. The polypeptide is Coatomer subunit zeta (Encephalitozoon cuniculi (strain GB-M1) (Microsporidian parasite)).